Reading from the N-terminus, the 297-residue chain is 4-hydroxy-tetrahydrodipicolinate synthase (297 aa).

Residue Thr51 participates in pyruvate binding. The Proton donor/acceptor role is filled by Tyr139. The active-site Schiff-base intermediate with substrate is the Lys167. Val209 lines the pyruvate pocket.

Belongs to the DapA family. In terms of assembly, homotetramer; dimer of dimers.

It localises to the cytoplasm. The enzyme catalyses L-aspartate 4-semialdehyde + pyruvate = (2S,4S)-4-hydroxy-2,3,4,5-tetrahydrodipicolinate + H2O + H(+). It participates in amino-acid biosynthesis; L-lysine biosynthesis via DAP pathway; (S)-tetrahydrodipicolinate from L-aspartate: step 3/4. Its function is as follows. Catalyzes the condensation of (S)-aspartate-beta-semialdehyde [(S)-ASA] and pyruvate to 4-hydroxy-tetrahydrodipicolinate (HTPA). The sequence is that of 4-hydroxy-tetrahydrodipicolinate synthase from Albidiferax ferrireducens (strain ATCC BAA-621 / DSM 15236 / T118) (Rhodoferax ferrireducens).